The sequence spans 242 residues: MAGHSKWANIKHRKGAQDALKAKIFNKFSKEIMVAVAKGGSDPNSNPALRLIISKARAKSMPKSNIEKAIAKGEGSTSNGENFKEIIYSGTLSHGISVIVVILTDNINRAIASLQALFRRANGQIGKQNSIPYLFEQKGYLEIEKNNLDEDDLMLFCLDNGAEDFQSDGENYMIYCQPRKISELKNEIEKKFSPNFRAVEISYFPNEWVELDQENTEKILNQIDNFLDDEDIQNVYHNLKFA.

This sequence belongs to the TACO1 family.

Its subcellular location is the cytoplasm. The polypeptide is Probable transcriptional regulatory protein MHP7448_0474 (Mesomycoplasma hyopneumoniae (strain 7448) (Mycoplasma hyopneumoniae)).